The chain runs to 757 residues: Mitofusin-2 (757 aa).

The Cytoplasmic portion of the chain corresponds to 1–604; sequence MSLLFSRCNS…TQEELMVSMV (604 aa). A part of a helix bundle domain, formed by helices from N-terminal and C-terminal regions region spans residues 30–94; that stretch reads KHFVTAKKKI…VRGISEVLAR (65 aa). The Dynamin-type G domain occupies 93 to 342; it reads ARRHMKVAFF…VRMFEFQNFE (250 aa). The segment at 103-110 is G1 motif; it reads GRTSNGKS. Residue 106–111 participates in GTP binding; that stretch reads SNGKST. The residue at position 111 (T111) is a Phosphothreonine; by PINK1. The interval 129–130 is G2 motif; that stretch reads TT. The tract at residues 199–202 is G3 motif; the sequence is DSPG. Residue 258–261 participates in GTP binding; sequence NRWD. A G4 motif region spans residues 258-261; the sequence is NRWD. Residue E288 is a region of interest, G5 motif. GTP-binding residues include S305 and K307. A part of a helix bundle domain, formed by helices from N-terminal and C-terminal regions region spans residues 359-385; the sequence is EQHTVRAKQIAEAVRLIMDSLHIAAQE. Residues 406 to 434 are a coiled coil; the sequence is KQLELLAQDYKLRIKQITEEVERQVSTAM. A Phosphoserine modification is found at S442. Residues 605 to 625 form a helical membrane-spanning segment; that stretch reads TGLASLTSRTSMGILVVGGVV. Position 626 (W626) is a topological domain, mitochondrial intermembrane. Residues 627 to 647 traverse the membrane as a helical segment; that stretch reads KAVGWRLIALSFGLYGLLYVY. Residues 648 to 757 are Cytoplasmic-facing; that stretch reads ERLTWTTKAK…FTHQYLQPSR (110 aa). Residues 696–738 are a coiled coil; sequence FAHLCQQVDITRDNLEQEIAAMNKKVEALDSLQSRAKLLRNKA. The part of a helix bundle domain, formed by helices from N-terminal and C-terminal regions stretch occupies residues 722 to 753; it reads EALDSLQSRAKLLRNKAGWLDSELNMFTHQYL.

It belongs to the TRAFAC class dynamin-like GTPase superfamily. Dynamin/Fzo/YdjA family. Mitofusin subfamily. As to quaternary structure, forms homomultimers and heteromultimers with MFN1. Oligomerization is essential for mitochondrion fusion. Interacts with VAT1. Interacts with STOML2; may form heterooligomers. Interacts (phosphorylated) with PRKN. Interacts with EIF2AK3. Interacts with THG1L; THG1L probably functions as a guanyl-nucleotide exchange factor/GEF, activating MFN2. Post-translationally, phosphorylated by PINK1. Ubiquitinated by non-degradative ubiquitin by PRKN, promoting mitochondrial fusion; deubiquitination by USP30 inhibits mitochondrial fusion. Ubiquitinated by HUWE1 when dietary stearate (C18:0) levels are low; ubiquitination inhibits mitochondrial fusion. As to expression, ubiquitous. Expression is markedly reduced in ApoE-knockout mouse atherosclerotic arteries.

Its subcellular location is the mitochondrion outer membrane. The catalysed reaction is GTP + H2O = GDP + phosphate + H(+). Functionally, mitochondrial outer membrane GTPase that mediates mitochondrial clustering and fusion. Mitochondria are highly dynamic organelles, and their morphology is determined by the equilibrium between mitochondrial fusion and fission events. Overexpression induces the formation of mitochondrial networks. Membrane clustering requires GTPase activity and may involve a major rearrangement of the coiled coil domains. Plays a central role in mitochondrial metabolism and may be associated with obesity and/or apoptosis processes. Plays an important role in the regulation of vascular smooth muscle cell proliferation. Involved in the clearance of damaged mitochondria via selective autophagy (mitophagy). Is required for PRKN recruitment to dysfunctional mitochondria. Involved in the control of unfolded protein response (UPR) upon ER stress including activation of apoptosis and autophagy during ER stress. Acts as an upstream regulator of EIF2AK3 and suppresses EIF2AK3 activation under basal conditions. The protein is Mitofusin-2 (Mfn2) of Mus musculus (Mouse).